The sequence spans 1286 residues: CLIP-associating protein 2 (1286 aa).

Positions 1-40 are golgi localization; it reads MRRLICKRICDYKSFDDEESVDGNRPSSAASAFKVPAPKT. Residues Ser-14 and Ser-20 each carry the phosphoserine modification. The tract at residues 17–70 is disordered; the sequence is DEESVDGNRPSSAASAFKVPAPKTPGNPVNSARKPGSAGGPKAGGTSKEGGAGA. Residues 53-69 show a composition bias toward gly residues; it reads SAGGPKAGGTSKEGGAG. Residues 66–317 form a TOG 1 region; the sequence is GGAGAVDEDD…KSLQTYLKSS (252 aa). 3 HEAT repeats span residues 179 to 214, 215 to 251, and 256 to 293; these read HGAE…IRHT, HVPR…EWQT, and RHAA…HFPG. Disordered regions lie at residues 320–350 and 355–374; these read VASL…TANP and GRVS…LQRS. Residues Ser-322, Ser-333, and Ser-336 each carry the phosphoserine modification. Residues 322–340 are compositionally biased toward low complexity; it reads SLPQSDRSSSSSQESLNRP. A compositionally biased stretch (polar residues) spans 341–350; the sequence is FSSKWSTANP. 3 positions are modified to phosphoserine: Ser-374, Ser-376, and Ser-413. Positions 410 to 473 are disordered; sequence SYASLEDTSD…GSRSGSPGRV (64 aa). The segment covering 417 to 431 has biased composition (basic and acidic residues); that stretch reads TSDKMDGTASEDGRV. The segment at 450–565 is interaction with microtubules, MAPRE1 and MAPRE3; the sequence is RGRSRTKMVS…GPGYGMSQSS (116 aa). Low complexity predominate over residues 459–473; that stretch reads SQSQPGSRSGSPGRV. Residues Ser-461, Ser-465, Ser-469, Ser-484, and Ser-495 each carry the phosphoserine modification. The tract at residues 492–566 is disordered; the sequence is NSASAQKRSK…PGYGMSQSSR (75 aa). Positions 500–503 match the SXIP motif 1; mediates interaction with MAPRE1 and targeting to microtubule plus ends motif; sequence SKIP. Ser-513 carries the phosphoserine modification. Positions 523 to 526 match the SXIP motif 2; mediates interaction with MAPRE1 and targeting to microtubule plus ends motif; that stretch reads SRIP. Residues Ser-531, Ser-535, Ser-570, Ser-572, Ser-581, Ser-614, and Ser-620 each carry the phosphoserine modification. The segment covering 606–616 has biased composition (basic and acidic residues); it reads RYESYGMHSDD. The tract at residues 606–638 is disordered; it reads RYESYGMHSDDDANSDASSACSERSYSSRNGSI. The segment covering 620–634 has biased composition (low complexity); it reads SDASSACSERSYSSR. The interval 642–873 is TOG 2; it reads MRQTEDVAEV…TKLLHNHLRN (232 aa). HEAT repeat units lie at residues 702 to 739 and 764 to 801; these read KVFS…KMGA and LQFN…QMDP. Thr-779 carries the phosphothreonine modification. Positions 864 to 1286 are interaction with RSN and localization to the Golgi and kinetochores; the sequence is TKLLHNHLRN…DPTTDVSGQS (423 aa). Disordered stretches follow at residues 870-920 and 944-990; these read HLRN…FDYD and SFRS…QPAL. Composition is skewed to polar residues over residues 872–884 and 893–914; these read RNTG…SMGS and SPAN…TLSP. Position 884 is a phosphoserine (Ser-884). Ser-944, Ser-947, Ser-1005, and Ser-1021 each carry phosphoserine. Residues 947–964 show a composition bias toward basic and acidic residues; sequence SQEDMSEPLKRDPKKEDG. Residues 1009–1286 are required for cortical localization; sequence RDYNPYNYSD…DPTTDVSGQS (278 aa). HEAT repeat units lie at residues 1046 to 1083, 1090 to 1127, and 1208 to 1245; these read LDHS…TQEE, EHFK…HQPA, and LLLP…VIGD.

Belongs to the CLASP family. In terms of assembly, interacts with microtubules. Interacts with MAPRE1; probably required for targeting to the growing microtubule plus ends. Interacts with CLIP2, ERC1, MAPRE3, PHLDB2 and RSN. The interaction with ERC1 may be mediated by PHLDB2. Interacts with GCC2; recruits CLASP2 to Golgi membranes. Interacts with MACF1. Interacts with SOGA1 and MTCL1. Post-translationally, phosphorylated by GSK3B. Phosphorylation by GSK3B may negatively regulate binding to microtubule lattices in lamella.

It localises to the cytoplasm. The protein localises to the cytoskeleton. The protein resides in the microtubule organizing center. Its subcellular location is the centrosome. It is found in the chromosome. It localises to the centromere. The protein localises to the kinetochore. The protein resides in the spindle. Its subcellular location is the golgi apparatus. It is found in the trans-Golgi network. It localises to the cell membrane. The protein localises to the cell projection. The protein resides in the ruffle membrane. Its subcellular location is the cell cortex. In terms of biological role, microtubule plus-end tracking protein that promotes the stabilization of dynamic microtubules. Involved in the nucleation of noncentrosomal microtubules originating from the trans-Golgi network (TGN). Required for the polarization of the cytoplasmic microtubule arrays in migrating cells towards the leading edge of the cell. May act at the cell cortex to enhance the frequency of rescue of depolymerizing microtubules by attaching their plus-ends to cortical platforms composed of ERC1 and PHLDB2. This cortical microtubule stabilizing activity is regulated at least in part by phosphatidylinositol 3-kinase signaling. Also performs a similar stabilizing function at the kinetochore which is essential for the bipolar alignment of chromosomes on the mitotic spindle. Acts as a mediator of ERBB2-dependent stabilization of microtubules at the cell cortex. This Rattus norvegicus (Rat) protein is CLIP-associating protein 2 (Clasp2).